The primary structure comprises 571 residues: Proline--tRNA ligase (571 aa).

It belongs to the class-II aminoacyl-tRNA synthetase family. ProS type 1 subfamily. In terms of assembly, homodimer.

The protein resides in the cytoplasm. It catalyses the reaction tRNA(Pro) + L-proline + ATP = L-prolyl-tRNA(Pro) + AMP + diphosphate. Catalyzes the attachment of proline to tRNA(Pro) in a two-step reaction: proline is first activated by ATP to form Pro-AMP and then transferred to the acceptor end of tRNA(Pro). As ProRS can inadvertently accommodate and process non-cognate amino acids such as alanine and cysteine, to avoid such errors it has two additional distinct editing activities against alanine. One activity is designated as 'pretransfer' editing and involves the tRNA(Pro)-independent hydrolysis of activated Ala-AMP. The other activity is designated 'posttransfer' editing and involves deacylation of mischarged Ala-tRNA(Pro). The misacylated Cys-tRNA(Pro) is not edited by ProRS. This chain is Proline--tRNA ligase, found in Actinobacillus pleuropneumoniae serotype 3 (strain JL03).